Reading from the N-terminus, the 434-residue chain is MFS-type transporter pynF (434 aa).

Positions 1–13 (MSHDQRSPSEEVS) are enriched in basic and acidic residues. The interval 1 to 34 (MSHDQRSPSEEVSRTALSKPASESTIVGDGHHPL) is disordered. 12 consecutive transmembrane segments (helical) span residues 44–64 (WLVV…LNAF), 84–104 (IAWI…VVGP), 109–129 (VGAT…LMLT), 138–158 (LILA…YPTI), 171–191 (IALG…TEII), 203–223 (TVRA…VLII), 249–269 (LLFS…FFYL), 280–302 (VTGA…VLTG), 311–331 (FNVI…LHKI), 334–354 (SGAI…LISL), 375–395 (LMMG…GALL), and 402–422 (WYGF…VTIL).

It belongs to the major facilitator superfamily. Monocarboxylate porter (TC 2.A.1.13) family.

Its subcellular location is the cell membrane. MFS-type transporter; part of the gene cluster that mediates the biosynthesis of pyranonigrins, a family of antioxidative compounds. May be involved in the secretion of pyranonigrins. This is MFS-type transporter pynF from Aspergillus niger (strain ATCC MYA-4892 / CBS 513.88 / FGSC A1513).